Here is a 306-residue protein sequence, read N- to C-terminus: UDP-3-O-acyl-N-acetylglucosamine deacetylase (306 aa).

3 residues coordinate Zn(2+): His-79, His-238, and Asp-242. The active-site Proton donor is His-265.

It belongs to the LpxC family. Zn(2+) serves as cofactor.

The enzyme catalyses a UDP-3-O-[(3R)-3-hydroxyacyl]-N-acetyl-alpha-D-glucosamine + H2O = a UDP-3-O-[(3R)-3-hydroxyacyl]-alpha-D-glucosamine + acetate. It participates in glycolipid biosynthesis; lipid IV(A) biosynthesis; lipid IV(A) from (3R)-3-hydroxytetradecanoyl-[acyl-carrier-protein] and UDP-N-acetyl-alpha-D-glucosamine: step 2/6. In terms of biological role, catalyzes the hydrolysis of UDP-3-O-myristoyl-N-acetylglucosamine to form UDP-3-O-myristoylglucosamine and acetate, the committed step in lipid A biosynthesis. The sequence is that of UDP-3-O-acyl-N-acetylglucosamine deacetylase from Shewanella denitrificans (strain OS217 / ATCC BAA-1090 / DSM 15013).